The sequence spans 393 residues: Diphosphomevalonate decarboxylase (393 aa).

Residues 21 to 24, Arg77, 156 to 161, and Thr212 contribute to the (R)-5-diphosphomevalonate site; these read YWGK and SGSACR.

Belongs to the diphosphomevalonate decarboxylase family. Homodimer.

The protein localises to the cytoplasm. It localises to the nucleus. The catalysed reaction is (R)-5-diphosphomevalonate + ATP = isopentenyl diphosphate + ADP + phosphate + CO2. The protein operates within isoprenoid biosynthesis; isopentenyl diphosphate biosynthesis via mevalonate pathway; isopentenyl diphosphate from (R)-mevalonate: step 3/3. Its function is as follows. Diphosphomevalonate decarboxylase; part of the second module of ergosterol biosynthesis pathway that includes the middle steps of the pathway. Mvd1 converts diphosphomevalonate into isopentenyl diphosphate. The second module is carried out in the vacuole and involves the formation of farnesyl diphosphate, which is also an important intermediate in the biosynthesis of ubiquinone, dolichol, heme and prenylated proteins. Activity by the mevalonate kinase erg12 first converts mevalonate into 5-phosphomevalonate. 5-phosphomevalonate is then further converted to 5-diphosphomevalonate by the phosphomevalonate kinase erg8. The diphosphomevalonate decarboxylase mvd1 then produces isopentenyl diphosphate. The isopentenyl-diphosphate delta-isomerase idi1 then catalyzes the 1,3-allylic rearrangement of the homoallylic substrate isopentenyl (IPP) to its highly electrophilic allylic isomer, dimethylallyl diphosphate (DMAPP). Finally the farnesyl diphosphate synthase fps1 catalyzes the sequential condensation of isopentenyl pyrophosphate with dimethylallyl pyrophosphate, and then with the resultant geranylpyrophosphate to the ultimate product farnesyl pyrophosphate. This Schizosaccharomyces pombe (strain 972 / ATCC 24843) (Fission yeast) protein is Diphosphomevalonate decarboxylase (mvd1).